The chain runs to 105 residues: Met repressor (105 aa).

Belongs to the MetJ family. Homodimer.

Its subcellular location is the cytoplasm. Its function is as follows. This regulatory protein, when combined with SAM (S-adenosylmethionine) represses the expression of the methionine regulon and of enzymes involved in SAM synthesis. In Histophilus somni (strain 129Pt) (Haemophilus somnus), this protein is Met repressor.